Here is a 196-residue protein sequence, read N- to C-terminus: Protein GrpE (196 aa).

The tract at residues 1–39 (MSSKEQKTPEGQAPEEIIMDQHEEIEAVEPEASAEQVDP) is disordered.

It belongs to the GrpE family. In terms of assembly, homodimer.

The protein resides in the cytoplasm. Participates actively in the response to hyperosmotic and heat shock by preventing the aggregation of stress-denatured proteins, in association with DnaK and GrpE. It is the nucleotide exchange factor for DnaK and may function as a thermosensor. Unfolded proteins bind initially to DnaJ; upon interaction with the DnaJ-bound protein, DnaK hydrolyzes its bound ATP, resulting in the formation of a stable complex. GrpE releases ADP from DnaK; ATP binding to DnaK triggers the release of the substrate protein, thus completing the reaction cycle. Several rounds of ATP-dependent interactions between DnaJ, DnaK and GrpE are required for fully efficient folding. This chain is Protein GrpE, found in Escherichia coli O139:H28 (strain E24377A / ETEC).